The sequence spans 157 residues: Transcription elongation factor GreA (157 aa).

Belongs to the GreA/GreB family.

Necessary for efficient RNA polymerase transcription elongation past template-encoded arresting sites. The arresting sites in DNA have the property of trapping a certain fraction of elongating RNA polymerases that pass through, resulting in locked ternary complexes. Cleavage of the nascent transcript by cleavage factors such as GreA or GreB allows the resumption of elongation from the new 3'terminus. GreA releases sequences of 2 to 3 nucleotides. The protein is Transcription elongation factor GreA of Chelativorans sp. (strain BNC1).